Here is a 132-residue protein sequence, read N- to C-terminus: UPF0299 membrane protein Ent638_2744 (132 aa).

4 helical membrane passes run 8-28 (VWQY…GIFI), 31-51 (LLPI…LLLA), 63-83 (GCFV…VGVM), and 93-113 (FGPI…VVSW).

Belongs to the UPF0299 family.

It localises to the cell inner membrane. The polypeptide is UPF0299 membrane protein Ent638_2744 (Enterobacter sp. (strain 638)).